We begin with the raw amino-acid sequence, 421 residues long: Probable UDP-arabinose 4-epimerase 1 (421 aa).

The Cytoplasmic portion of the chain corresponds to 1-33; it reads MLPTNRNRPQQRPARSWYFISDMDFSDPKRKPR. The chain crosses the membrane as a helical; Signal-anchor for type II membrane protein span at residues 34–53; sequence YLSKILMVALLTAMCVVMLT. At 54-421 the chain is on the lumenal side; that stretch reads QPPCHRRTPS…GYGPPQAMVL (368 aa). 74–105 serves as a coordination point for NAD(+); the sequence is HVLVTGGAGYIGSHAALRLLKDSFRVTIVDNL. The active-site Proton acceptor is Tyr-222.

It belongs to the NAD(P)-dependent epimerase/dehydratase family. Requires NAD(+) as cofactor.

The protein resides in the golgi apparatus. Its subcellular location is the golgi stack membrane. It catalyses the reaction UDP-beta-L-arabinopyranose = UDP-alpha-D-xylose. Its pathway is nucleotide-sugar biosynthesis; UDP-L-arabinose biosynthesis; UDP-L-arabinose from UDP-alpha-D-xylose: step 1/1. It participates in cell wall biogenesis; cell wall polysaccharide biosynthesis. In Oryza sativa subsp. japonica (Rice), this protein is Probable UDP-arabinose 4-epimerase 1 (UEL-1).